The primary structure comprises 2400 residues: Retinitis pigmentosa 1-like 1 protein (2400 aa).

2 Doublecortin domains span residues 34–118 (KKIT…GPGR) and 152–231 (RRIL…PAMK). 6 disordered regions span residues 104 to 152 (CSDK…KTPR), 230 to 310 (MKNA…DDMK), 444 to 1064 (GRER…DREA), 1188 to 1251 (AMTE…GDLE), 1275 to 1501 (EAER…GAAE), and 1697 to 2400 (RGEH…DLDF). Over residues 242 to 251 (SGLTSRNKNG) the composition is skewed to polar residues. The span at 277 to 287 (RPGPSNPPVGP) shows a compositional bias: pro residues. Residues 450-460 (QDSASPASSTG) are compositionally biased toward polar residues. 2 stretches are compositionally biased toward low complexity: residues 530–543 (GASSDSSASTGSHE) and 573–584 (DPASPALSLSSL). Residues 591 to 601 (AETQGQGTEQA) show a composition bias toward polar residues. 2 stretches are compositionally biased toward low complexity: residues 625–637 (SSTPSTCTSSQQG) and 645–654 (ASAMSSPSSP). Residues 661-670 (PRGHPRHSHY) show a composition bias toward basic residues. Composition is skewed to polar residues over residues 711-740 (TRTQASGNLRPPSSGSLPSQDLLGTSSATV) and 825-835 (CCSQPGTQPAQ). Composition is skewed to low complexity over residues 864 to 880 (QRRSSSCGSTGSSHQST), 903 to 921 (PNSGASRRSSASQGAGSRG), and 941 to 953 (SGVSPSSLPRSSP). Polar residues-rich tracts occupy residues 1223–1238 (LVTQGTELPLKTSNQR) and 1285–1299 (ASSNLEQLAENTVQE). Residues 1292–1307 (LAENTVQEEVQLEETK) form a 1-1; approximate repeat. A 3 X 16 AA approximate tandem repeats of T-E-E-G-L-Q-E-E-G-V-Q-L-E-E-T-K region spans residues 1292 to 1342 (LAENTVQEEVQLEETKEGTEGEGLQEEAVQLEETKTEEGLQEEGVQLEETK). The 1-2; approximate repeat unit spans residues 1310–1326 (TEGEGLQEEAVQLEETK). The stretch at 1327 to 1342 (TEEGLQEEGVQLEETK) is one 1-3 repeat. Residues 1346 to 1363 (GEGQQEEEAQLEEIEETG) show a composition bias toward acidic residues. Positions 1434 to 1445 (RASASAEPCPAE) are enriched in low complexity. Composition is skewed to polar residues over residues 1460-1472 (TDPSASERQSGSQ) and 1489-1501 (EHTQAQPTQGAAE). Gly residues predominate over residues 1726–1736 (AEGGLGPGLSQ). Basic and acidic residues-rich tracts occupy residues 1752 to 1762 (LNRDKDPKLGE) and 1769 to 1778 (AQEREGKTHN). Tandem repeats lie at residues 1836–1851 (EAPEAEGEAQPESEGV), 1852–1867 (EAPEAEGDAQEAEGEA), and 1875–1890 (EAPEAEGEAQPESEDV). Composition is skewed to acidic residues over residues 1836–1909 (EAPE…AEAP) and 1920–1948 (ESVEALETEGEDEPESEGAEAQEAEEAAQ). Residues 1836–2244 (EAPEAEGEAQ…GEAQPESEGE (409 aa)) are 25 X 16 AA approximate tandem repeats of [ED]-[AT]-[PQ]-[ED]-[AVT]-E-[GKE]-[ED]-[AMT]-Q-[EPK]-[EAT]-[TSELP]-[EG]-[EGSQDI]-[AVIE]. Residues 1891–1906 (ETPEAEWEVQPESEGA) form a 2-4; approximate repeat. One copy of the 2-5 repeat lies at 1907 to 1921 (EAPEAEKEAQPETES). The 2-6; approximate repeat unit spans residues 1923-1938 (EALETEGEDEPESEGA). Residues 1934–2017 (ESEGAEAQEA…EMQEAEEEAQ (84 aa)) are a coiled coil. A 2-7 repeat occupies 1939 to 1954 (EAQEAEEAAQEAEGQT). Low complexity predominate over residues 1949–1958 (EAEGQTQPES). The 2-8; approximate repeat unit spans residues 1955–1970 (QPESEVIESQEAEEEA). Composition is skewed to acidic residues over residues 1959-2022 (EVIE…ESDG), 2048-2075 (AQPESDGVEAPEAEEEAQEAEGEVQEAE), 2083-2108 (EDVDAQEAEGEAQPESEGVEAPEAEG), and 2117-2245 (EAPE…EGET). The 2-9; approximate repeat unit spans residues 1971–1984 (QPESEDVEALEVEV). 2 consecutive repeat copies span residues 1985-2000 (ETQEAEGEAQPESEDV) and 2001-2016 (EAPEAEGEMQEAEEEA). A 2-12; approximate repeat occupies 2017–2031 (QPESDGVEAQPKSEG). The 2-13d repeat unit spans residues 2033-2048 (EAQEVEGETQKTEGDA). Residues 2054-2081 (GVEAPEAEEEAQEAEGEVQEAEGEAHPE) adopt a coiled-coil conformation. Residues 2056 to 2071 (EAPEAEEEAQEAEGEV) form a 2-14 repeat. Residues 2072-2085 (QEAEGEAHPESEDV) form a 2-15; approximate repeat. Repeat copies occupy residues 2086–2101 (DAQEAEGEAQPESEGV), 2102–2116 (EAPEAEGEAQKAEGI), 2117–2132 (EAPETEGEAQPESEGI), 2133–2148 (EAPEAEGEAQPESEGV), 2149–2164 (EAQDAEGEAQPESEGI), 2165–2180 (EAQEAEEEAQPELEGV), 2181–2196 (EAPEAEGEAQPESEGI), 2197–2212 (EAPEAEGEAQPELEGV), 2213–2228 (EAPEAEEEAQPEPEGV), and 2229–2244 (ETPEAEGEAQPESEGE). A compositionally biased stretch (polar residues) spans 2292 to 2308 (PGSQTGPSSSRASSWGN). The segment covering 2312-2327 (KDSENDHVLGDTRSPD) has biased composition (basic and acidic residues).

In terms of assembly, interacts with RP1; has a synergistic effect with RP1 in photoreceptor differentiation. Retinal-specific; expressed in photoreceptor.

The protein resides in the cytoplasm. Its subcellular location is the cytoskeleton. It localises to the cilium axoneme. It is found in the cell projection. The protein localises to the cilium. The protein resides in the photoreceptor outer segment. Functionally, required for the differentiation of photoreceptor cells. Plays a role in the organization of outer segment of rod and cone photoreceptors. The protein is Retinitis pigmentosa 1-like 1 protein (RP1L1) of Homo sapiens (Human).